Here is a 190-residue protein sequence, read N- to C-terminus: Cysteine dioxygenase (190 aa).

His-78, His-80, and His-132 together coordinate Fe cation. Positions 85–149 (CFVKILDGEL…SNGAVSLHLY (65 aa)) form a cross-link, 3'-(S-cysteinyl)-tyrosine (Cys-Tyr).

It belongs to the cysteine dioxygenase family. Fe cation is required as a cofactor. In terms of processing, the thioether cross-link between Cys-85 and Tyr-149 plays a structural role through stabilizing the Fe(2+) ion, and prevents the production of highly damaging free hydroxyl radicals by holding the oxygen radical via hydroxyl hydrogen.

It carries out the reaction L-cysteine + O2 = 3-sulfino-L-alanine + H(+). Its pathway is organosulfur biosynthesis; taurine biosynthesis; hypotaurine from L-cysteine: step 1/2. The sequence is that of Cysteine dioxygenase (cdo-1) from Caenorhabditis briggsae.